Consider the following 127-residue polypeptide: Aspartate 1-decarboxylase (127 aa).

Ser-25 serves as the catalytic Schiff-base intermediate with substrate; via pyruvic acid. Ser-25 is subject to Pyruvic acid (Ser). Position 57 (Thr-57) interacts with substrate. The Proton donor role is filled by Tyr-58. Residue 73 to 75 (GAA) participates in substrate binding.

It belongs to the PanD family. In terms of assembly, heterooctamer of four alpha and four beta subunits. Requires pyruvate as cofactor. In terms of processing, is synthesized initially as an inactive proenzyme, which is activated by self-cleavage at a specific serine bond to produce a beta-subunit with a hydroxyl group at its C-terminus and an alpha-subunit with a pyruvoyl group at its N-terminus.

It is found in the cytoplasm. It catalyses the reaction L-aspartate + H(+) = beta-alanine + CO2. The protein operates within cofactor biosynthesis; (R)-pantothenate biosynthesis; beta-alanine from L-aspartate: step 1/1. Catalyzes the pyruvoyl-dependent decarboxylation of aspartate to produce beta-alanine. This chain is Aspartate 1-decarboxylase, found in Staphylococcus aureus (strain JH1).